The chain runs to 626 residues: Chaperone protein HtpG (626 aa).

The tract at residues 1 to 341 (MIKKEFKAES…SEDLSLNISR (341 aa)) is a; substrate-binding. Positions 342 to 552 (EMLQHDRQLK…DGDVTIEMEK (211 aa)) are b. Residues 553–626 (ILSAMPNNQE…FTNDICKLMS (74 aa)) form a c region.

It belongs to the heat shock protein 90 family. As to quaternary structure, homodimer.

Its subcellular location is the cytoplasm. Molecular chaperone. Has ATPase activity. The polypeptide is Chaperone protein HtpG (Alkaliphilus metalliredigens (strain QYMF)).